The chain runs to 129 residues: uncharacterized protein (129 aa).

The 107-residue stretch at 3 to 109 (IFCKIINGEI…IPRYEGDGEV (107 aa)) folds into the HIT domain. A Histidine triad motif motif is present at residues 94-98 (HVHFH).

This is an uncharacterized protein from Methanocaldococcus jannaschii (strain ATCC 43067 / DSM 2661 / JAL-1 / JCM 10045 / NBRC 100440) (Methanococcus jannaschii).